A 230-amino-acid polypeptide reads, in one-letter code: Flagellar L-ring protein (230 aa).

An N-terminal signal peptide occupies residues 1–15 (MSRLPSLSRLCLAIA). A lipid anchor (N-palmitoyl cysteine) is attached at Cys-16. A lipid anchor (S-diacylglycerol cysteine) is attached at Cys-16.

It belongs to the FlgH family. As to quaternary structure, the basal body constitutes a major portion of the flagellar organelle and consists of four rings (L,P,S, and M) mounted on a central rod.

The protein resides in the cell outer membrane. Its subcellular location is the bacterial flagellum basal body. In terms of biological role, assembles around the rod to form the L-ring and probably protects the motor/basal body from shearing forces during rotation. This chain is Flagellar L-ring protein, found in Xanthomonas euvesicatoria pv. vesicatoria (strain 85-10) (Xanthomonas campestris pv. vesicatoria).